The sequence spans 183 residues: Capsid protein (183 aa).

The disordered stretch occupies residues 136–183 (NAPILSTLPETTVVRRRGRSPRRRTPSPRRRRSQSPRRRRSQSPASQC). Residues 149–176 (VRRRGRSPRRRTPSPRRRRSQSPRRRRS) are compositionally biased toward basic residues. Phosphoserine; by host is present on residues serine 155, serine 162, and serine 170. Residues 155-161 (SPRRRTP) form a 1; half-length repeat. The 3 X 8 AA repeats of S-P-R-R-R-[PR]-S-Q stretch occupies residues 155–177 (SPRRRTPSPRRRRSQSPRRRRSQ). The short motif at 158–175 (RRTPSPRRRRSQSPRRRR) is the Bipartite nuclear localization signal element. Repeat copies occupy residues 162 to 169 (SPRRRRSQ) and 170 to 177 (SPRRRRSQ). The interval 177-183 (QSPASQC) is RNA binding.

This sequence belongs to the orthohepadnavirus core antigen family. As to quaternary structure, homodimerizes, then multimerizes. Interacts with cytosol exposed regions of viral L glycoprotein present in the reticulum-to-Golgi compartment. Interacts with human FLNB. Phosphorylated form interacts with host importin alpha; this interaction depends on the exposure of the NLS, which itself depends upon genome maturation and/or phosphorylation of the capsid protein. Interacts with host NUP153. In terms of processing, phosphorylated by host SRPK1, SRPK2, and maybe protein kinase C or GAPDH. Phosphorylation is critical for pregenomic RNA packaging. Protein kinase C phosphorylation is stimulated by HBx protein and may play a role in transport of the viral genome to the nucleus at the late step during the viral replication cycle.

The protein resides in the virion. Its subcellular location is the host cytoplasm. Self assembles to form an icosahedral capsid. Most capsids appear to be large particles with an icosahedral symmetry of T=4 and consist of 240 copies of capsid protein, though a fraction forms smaller T=3 particles consisting of 180 capsid proteins. Entering capsids are transported along microtubules to the nucleus. Phosphorylation of the capsid is thought to induce exposure of nuclear localization signal in the C-terminal portion of the capsid protein that allows binding to the nuclear pore complex via the importin (karyopherin-) alpha and beta. Capsids are imported in intact form through the nuclear pore into the nuclear basket, where it probably binds NUP153. Only capsids that contain the mature viral genome can release the viral DNA and capsid protein into the nucleoplasm. Immature capsids get stuck in the basket. Capsids encapsulate the pre-genomic RNA and the P protein. Pre-genomic RNA is reverse-transcribed into DNA while the capsid is still in the cytoplasm. The capsid can then either be directed to the nucleus, providing more genomes for transcription, or bud through the endoplasmic reticulum to provide new virions. The chain is Capsid protein from Hepatitis B virus genotype F2 (isolate Brazil/w4B) (HBV-F).